Reading from the N-terminus, the 214-residue chain is Probable nicotinate-nucleotide adenylyltransferase (214 aa).

It belongs to the NadD family.

It catalyses the reaction nicotinate beta-D-ribonucleotide + ATP + H(+) = deamido-NAD(+) + diphosphate. Its pathway is cofactor biosynthesis; NAD(+) biosynthesis; deamido-NAD(+) from nicotinate D-ribonucleotide: step 1/1. In terms of biological role, catalyzes the reversible adenylation of nicotinate mononucleotide (NaMN) to nicotinic acid adenine dinucleotide (NaAD). This chain is Probable nicotinate-nucleotide adenylyltransferase, found in Aeromonas salmonicida (strain A449).